The following is a 508-amino-acid chain: Ankyrin repeat domain-containing protein 34B (508 aa).

ANK repeat units follow at residues 9–38 (TDGN…YINE), 42–79 (RGET…DPNI), 83–113 (SGKS…DLSL), and 117–146 (SGYS…AKGK). Residues 157–185 (PSGRHTTQHHLNMPPADMDGSHPPATPSE) are disordered. At serine 260 the chain carries Phosphoserine. The residue at position 269 (threonine 269) is a Phosphothreonine. Serine 293 bears the Phosphoserine mark. Residues 361-370 (GANHYSSDSQ) show a composition bias toward polar residues. The tract at residues 361-380 (GANHYSSDSQLAEGVTPPTV) is disordered.

It belongs to the ANKRD34 family. Phosphorylated. As to expression, specifically and constitutively expressed in brain (at protein level).

It localises to the cytoplasm. It is found in the nucleus. This is Ankyrin repeat domain-containing protein 34B (Ankrd34b) from Mus musculus (Mouse).